Here is a 749-residue protein sequence, read N- to C-terminus: Putative Xaa-Pro aminopeptidase FRA1 (749 aa).

The disordered stretch occupies residues 1–33 (MTSKPSTSDGRAHSISHVPGTHMRGTSASHSPR). Phosphoserine occurs at positions 69, 92, and 95. Residues Asp-551, Asp-562, Glu-660, and Glu-674 each coordinate Mn(2+).

The protein belongs to the peptidase M24B family. In terms of assembly, homodimer. Interacts with FRA2. Mn(2+) is required as a cofactor.

The protein resides in the cytoplasm. The catalysed reaction is Release of any N-terminal amino acid, including proline, that is linked to proline, even from a dipeptide or tripeptide.. Functionally, involved in the regulation of the iron regulon in responss to decreased mitochondrial iron-sulfur cluster synthesis. The protein is Putative Xaa-Pro aminopeptidase FRA1 (FRA1) of Saccharomyces cerevisiae (strain ATCC 204508 / S288c) (Baker's yeast).